Reading from the N-terminus, the 124-residue chain is Large ribosomal subunit protein uL18 (124 aa).

It belongs to the universal ribosomal protein uL18 family. As to quaternary structure, part of the 50S ribosomal subunit; part of the 5S rRNA/L5/L18/L25 subcomplex. Contacts the 5S and 23S rRNAs.

Functionally, this is one of the proteins that bind and probably mediate the attachment of the 5S RNA into the large ribosomal subunit, where it forms part of the central protuberance. This is Large ribosomal subunit protein uL18 from Koribacter versatilis (strain Ellin345).